Here is a 475-residue protein sequence, read N- to C-terminus: Ribulose bisphosphate carboxylase large chain (475 aa).

Residues 1–2 constitute a propeptide that is removed on maturation; sequence MS. The residue at position 3 (proline 3) is an N-acetylproline. The residue at position 14 (lysine 14) is an N6,N6,N6-trimethyllysine. Positions 123 and 173 each coordinate substrate. Lysine 175 serves as the catalytic Proton acceptor. Lysine 177 serves as a coordination point for substrate. Positions 201, 203, and 204 each coordinate Mg(2+). Lysine 201 carries the post-translational modification N6-carboxylysine. Catalysis depends on histidine 294, which acts as the Proton acceptor. Substrate contacts are provided by arginine 295, histidine 327, and serine 379.

It belongs to the RuBisCO large chain family. Type I subfamily. Heterohexadecamer of 8 large chains and 8 small chains; disulfide-linked. The disulfide link is formed within the large subunit homodimers. Mg(2+) serves as cofactor. In terms of processing, the disulfide bond which can form in the large chain dimeric partners within the hexadecamer appears to be associated with oxidative stress and protein turnover.

Its subcellular location is the plastid. It localises to the chloroplast. The catalysed reaction is 2 (2R)-3-phosphoglycerate + 2 H(+) = D-ribulose 1,5-bisphosphate + CO2 + H2O. It carries out the reaction D-ribulose 1,5-bisphosphate + O2 = 2-phosphoglycolate + (2R)-3-phosphoglycerate + 2 H(+). Functionally, ruBisCO catalyzes two reactions: the carboxylation of D-ribulose 1,5-bisphosphate, the primary event in carbon dioxide fixation, as well as the oxidative fragmentation of the pentose substrate in the photorespiration process. Both reactions occur simultaneously and in competition at the same active site. This is Ribulose bisphosphate carboxylase large chain from Cryptomeria japonica (Japanese cedar).